Consider the following 116-residue polypeptide: Large ribosomal subunit protein bL20c (116 aa).

It belongs to the bacterial ribosomal protein bL20 family.

The protein resides in the plastid. It is found in the chloroplast. Its function is as follows. Binds directly to 23S ribosomal RNA and is necessary for the in vitro assembly process of the 50S ribosomal subunit. It is not involved in the protein synthesizing functions of that subunit. The polypeptide is Large ribosomal subunit protein bL20c (Cryptomeria japonica (Japanese cedar)).